Reading from the N-terminus, the 202-residue chain is MSDLRISEAFLYMDYLCFRALCCKGPPPARPEYDLVCIGLTGSGKTSLLSKLCSESPDSVVSTTGFSIKAVPFQNAILNVKELGGADNIRKYWSRYYQGSQGVIFVLDSASSEDDLETARNELHSALQHPQLCTLPFLILANHQDKPAARSVQEVKKYFELEPLARGKRWILQPCSLDDMEALKDSFSQLINLLEDHEAVRM.

GTP is bound by residues 39-46 (GLTGSGKT), 82-86 (ELGGA), and 142-145 (NHQD).

It belongs to the small GTPase superfamily. Arf family.

This is ADP-ribosylation factor-like protein 15 (ARL15) from Bos taurus (Bovine).